We begin with the raw amino-acid sequence, 239 residues long: 4-hydroxy-tetrahydrodipicolinate reductase (239 aa).

NAD(+) contacts are provided by residues 9 to 14 (GINGKI), 78 to 80 (GTT), and 104 to 107 (APNF). Histidine 134 (proton donor/acceptor) is an active-site residue. (S)-2,3,4,5-tetrahydrodipicolinate is bound at residue histidine 135. Catalysis depends on lysine 138, which acts as the Proton donor. 144–145 (GT) contributes to the (S)-2,3,4,5-tetrahydrodipicolinate binding site.

It belongs to the DapB family.

Its subcellular location is the cytoplasm. The catalysed reaction is (S)-2,3,4,5-tetrahydrodipicolinate + NAD(+) + H2O = (2S,4S)-4-hydroxy-2,3,4,5-tetrahydrodipicolinate + NADH + H(+). It catalyses the reaction (S)-2,3,4,5-tetrahydrodipicolinate + NADP(+) + H2O = (2S,4S)-4-hydroxy-2,3,4,5-tetrahydrodipicolinate + NADPH + H(+). It functions in the pathway amino-acid biosynthesis; L-lysine biosynthesis via DAP pathway; (S)-tetrahydrodipicolinate from L-aspartate: step 4/4. Catalyzes the conversion of 4-hydroxy-tetrahydrodipicolinate (HTPA) to tetrahydrodipicolinate. This Coxiella burnetii (strain CbuG_Q212) (Coxiella burnetii (strain Q212)) protein is 4-hydroxy-tetrahydrodipicolinate reductase.